The following is a 438-amino-acid chain: tRNA modification GTPase MnmE (438 aa).

3 residues coordinate (6S)-5-formyl-5,6,7,8-tetrahydrofolate: arginine 20, glutamate 78, and lysine 117. Residues 214–359 (GIRVLIIGKP…LIDEIKKLFY (146 aa)) form the TrmE-type G domain. A K(+)-binding site is contributed by asparagine 224. Residues 224–229 (NVGKST), 243–249 (TDIPGTT), and 268–271 (DTAG) contribute to the GTP site. Mg(2+) is bound at residue serine 228. The K(+) site is built by threonine 243, isoleucine 245, and threonine 248. Residue threonine 249 coordinates Mg(2+). (6S)-5-formyl-5,6,7,8-tetrahydrofolate is bound at residue lysine 438.

The protein belongs to the TRAFAC class TrmE-Era-EngA-EngB-Septin-like GTPase superfamily. TrmE GTPase family. As to quaternary structure, homodimer. Heterotetramer of two MnmE and two MnmG subunits. K(+) is required as a cofactor.

Its subcellular location is the cytoplasm. Its function is as follows. Exhibits a very high intrinsic GTPase hydrolysis rate. Involved in the addition of a carboxymethylaminomethyl (cmnm) group at the wobble position (U34) of certain tRNAs, forming tRNA-cmnm(5)s(2)U34. This is tRNA modification GTPase MnmE from Ureaplasma parvum serovar 3 (strain ATCC 27815 / 27 / NCTC 11736).